A 118-amino-acid polypeptide reads, in one-letter code: Appetite-regulating hormone (118 aa).

Residues 1–24 (MPSTGTICSLLLLSVLLMADLAMA) form the signal peptide. S27 is lipidated: O-decanoyl serine; alternate. S27 carries O-hexanoyl serine; alternate lipidation. S27 carries O-octanoyl serine; alternate lipidation. A disordered region spans residues 29 to 50 (LSPEHQKVQQRKESKKPAAKLK). A compositionally biased stretch (basic and acidic residues) spans 32–44 (EHQKVQQRKESKK). The propeptide at 53–76 (ALEGWLGPEDSGEVEGTEDKLEIR) is removed in mature form. L99 carries the leucine amide modification. Positions 100 to 118 (GKFLQDILWEEVTEAPADK) are cleaved as a propeptide — removed in mature form.

It belongs to the motilin family. O-octanoylated by GOAT/MBOAT4. O-octanoylation is essential for ghrelin activity. In terms of processing, amidation of Leu-99 is essential for obestatin activity.

It is found in the secreted. Its function is as follows. Ghrelin is the ligand for growth hormone secretagogue receptor type 1 (GHSR). Induces the release of growth hormone from the pituitary. Has an appetite-stimulating effect, induces adiposity and stimulates gastric acid secretion. Involved in growth regulation. Obestatin may be the ligand for GPR39. May have an appetite-reducing effect resulting in decreased food intake. May reduce gastric emptying activity and jejunal motility. The chain is Appetite-regulating hormone (GHRL) from Sus scrofa (Pig).